The primary structure comprises 463 residues: Chaperone SurA (463 aa).

A signal peptide spans 1 to 25 (MTKPFSVVLASLLAITSTISPLASA). PpiC domains are found at residues 174-276 (GSKY…KLME) and 289-388 (VTEY…QRVG). 2 disordered regions span residues 329-348 (ATAK…GDLG) and 434-463 (GDRA…KPTR). Over residues 439–452 (NNATAAPAKSADPA) the composition is skewed to low complexity. Over residues 453–463 (LPAPPPAKPTR) the composition is skewed to pro residues.

It is found in the periplasm. It catalyses the reaction [protein]-peptidylproline (omega=180) = [protein]-peptidylproline (omega=0). Its function is as follows. Chaperone involved in the correct folding and assembly of outer membrane proteins. Recognizes specific patterns of aromatic residues and the orientation of their side chains, which are found more frequently in integral outer membrane proteins. May act in both early periplasmic and late outer membrane-associated steps of protein maturation. This is Chaperone SurA from Xanthomonas oryzae pv. oryzae (strain KACC10331 / KXO85).